Here is a 621-residue protein sequence, read N- to C-terminus: Interferon-induced GTP-binding protein Mx1 (621 aa).

In terms of domain architecture, Dynamin-type G spans aspartate 31 to proline 304. Positions glycine 41–serine 48 are G1 motif. Glycine 41–serine 48 is a binding site for GTP. The segment at valine 66 to arginine 68 is G2 motif. The interval aspartate 142–glycine 145 is G3 motif. Residues aspartate 142–isoleucine 146 and threonine 211–aspartate 214 each bind GTP. Positions threonine 211–aspartate 214 are G4 motif. The G5 motif stretch occupies residues lysine 243–glycine 246. A GED domain is found at leucine 535–phenylalanine 621.

The protein belongs to the TRAFAC class dynamin-like GTPase superfamily. Dynamin/Fzo/YdjA family.

The protein localises to the cytoplasm. Functionally, does not inhibit strain RB-1 of the fish pathogen, infectious hematopoietic necrosis virus (IHNV). The sequence is that of Interferon-induced GTP-binding protein Mx1 (mx1) from Oncorhynchus mykiss (Rainbow trout).